The following is a 552-amino-acid chain: T-box transcription factor TBX4 (552 aa).

A compositionally biased stretch (basic and acidic residues) spans 1–14; the sequence is MLQDKGLSESEEAF. Positions 1–50 are disordered; the sequence is MLQDKGLSESEEAFRAPGPALGEASNTSTTNAPEPALATPGLSGAALSSP. Residues 76–256 constitute a DNA-binding region (T-box); the sequence is LHEKELWKKF…NNPFAKGFRG (181 aa). Residue Ser-514 is modified to Phosphoserine.

It localises to the nucleus. Transcriptional regulator that has an essential role in the organogenesis of lungs, pelvis, and hindlimbs. In Mus musculus (Mouse), this protein is T-box transcription factor TBX4 (Tbx4).